We begin with the raw amino-acid sequence, 160 residues long: RNA pyrophosphohydrolase (160 aa).

The region spanning proline 10–aspartate 154 is the Nudix hydrolase domain. The Nudix box signature appears at glycine 44–glycine 65.

Belongs to the Nudix hydrolase family. RppH subfamily. The cofactor is a divalent metal cation.

In terms of biological role, accelerates the degradation of transcripts by removing pyrophosphate from the 5'-end of triphosphorylated RNA, leading to a more labile monophosphorylated state that can stimulate subsequent ribonuclease cleavage. In Roseobacter denitrificans (strain ATCC 33942 / OCh 114) (Erythrobacter sp. (strain OCh 114)), this protein is RNA pyrophosphohydrolase.